Here is a 128-residue protein sequence, read N- to C-terminus: uncharacterized protein (128 aa).

2 consecutive transmembrane segments (helical) span residues 52-72 (LLVI…GIFL) and 91-111 (LFVA…VMLI).

The protein localises to the cell membrane. This is an uncharacterized protein from Mycoplasma pneumoniae (strain ATCC 29342 / M129 / Subtype 1) (Mycoplasmoides pneumoniae).